A 146-amino-acid chain; its full sequence is uncharacterized protein (146 aa).

Positions 1-137 constitute an HTH marR-type domain; sequence MLSQEFFNSF…TINVMNQIHE (137 aa).

This is an uncharacterized protein from Staphylococcus aureus (strain N315).